Reading from the N-terminus, the 914-residue chain is Eukaryotic initiation factor 4F subunit p130 (914 aa).

Pro residues predominate over residues 1 to 12; it reads MTDQRGPPPPHP. 4 disordered regions span residues 1 to 84, 128 to 205, 240 to 351, and 457 to 535; these read MTDQ…YNNR, PPYT…NEAV, ERKK…VNKS, and IARN…LVPS. Residues 26 to 44 are compositionally biased toward polar residues; the sequence is NQYSGANNSQPNNHYNENL. Residues 59–73 are compositionally biased toward low complexity; the sequence is KNGKYGTNKYNNRNN. Ser-74 bears the Phosphoserine mark. A compositionally biased stretch (low complexity) spans 145 to 155; it reads PKTTKIEITTK. Residues 156 to 195 are compositionally biased toward basic and acidic residues; sequence TGERLNLKKFHEEKKASKGEEKNDGVEQKSKSGTPFEKEA. Thr-196 carries the post-translational modification Phosphothreonine. Residues 201-315 form an interaction with PAB1 region; the sequence is ANEAVKDTLT…TGSVTKSVTF (115 aa). A compositionally biased stretch (basic and acidic residues) spans 240–263; sequence ERKKNGLISETEKKQETSNHDNTD. Composition is skewed to polar residues over residues 298–325 and 339–348; these read SVKTPQHVTGSVTKSVTFNEPENESSSQ and ISDTTGGKTV. Position 301 is a phosphothreonine (Thr-301). The span at 496–529 shows a compositional bias: basic and acidic residues; sequence RMGDDRRSNRGYTSRKDREKAAEKAEEQAPKEEI. Ser-503 is modified (phosphoserine). In terms of domain architecture, MIF4G spans 567 to 810; the sequence is ERKMKSLLNK…IDVKELREIK (244 aa). The tract at residues 833-914 is disordered; the sequence is QLRQKKNSQR…ALMNNDGDSD (82 aa). Residues 841–867 show a composition bias toward low complexity; that stretch reads QRSNSRFNNHNQSNSNRYSSNRRNMQN. The span at 868–886 shows a compositional bias: polar residues; the sequence is TQRDSFASTKTGSFRNNQR. Residue Ser-913 is modified to Phosphoserine.

The protein belongs to the eukaryotic initiation factor 4G family. In terms of assembly, component of the eIF4F complex, which composition varies with external and internal environmental conditions. It is composed of at least eIF4A (TIF1/TIF2), eIF4E (TIF45) and eIF4G (TIF4631 or TIF4632). Interacts with PAT1 in a RNA-dependent manner.

Its subcellular location is the cytoplasm. Its function is as follows. Component of the eIF4F complex, which interacts with the mRNA cap structure and serves as an initial point of assembly for the translation apparatus. Stimulates translation by interaction with polyadenylate-binding protein PAB1, bringing the 5'- and 3'-ends of the mRNA in proximity. The formation of this circular mRNP structure appears to be critical for the synergistic effects of the cap and the poly(A) tail in facilitating translation initiation, recycling of ribosomes, and mRNA stability. TIF4632 is probably essential when TIF4631 is missing. The protein is Eukaryotic initiation factor 4F subunit p130 of Saccharomyces cerevisiae (strain ATCC 204508 / S288c) (Baker's yeast).